Here is a 316-residue protein sequence, read N- to C-terminus: Apolipoprotein E (316 aa).

Residues 1-18 (MKVLWAALVVTLLAGCGA) form the signal peptide. 8 tandem repeats follow at residues 83 to 104 (ALMD…EQLG), 105 to 126 (PVTE…ARLG), 127 to 148 (ADME…AMVG), 149 to 170 (QSTE…KRLL), 171 to 192 (RDAE…EGAA), 193 to 214 (RSVN…TVHT), 215 to 232 (LVSK…QRLR), and 233 to 254 (GRLE…EQVQ). Residues 83–254 (ALMDDTMKEV…RLDEVREQVQ (172 aa)) form an 8 X 22 AA approximate tandem repeats region. Residues 161–171 (HLRKLRKRLLR) form an LDL and other lipoprotein receptors binding region. 165 to 168 (LRKR) contributes to the heparin binding site. Residues 213 to 289 (HTLVSKPLQE…SWFEPLVQDM (77 aa)) are lipid-binding and lipoprotein association. 228–235 (AQRLRGRL) provides a ligand contact to heparin. A homooligomerization region spans residues 265 to 316 (NQVRLQAEAFQGRLKSWFEPLVQDMQQKWAELVEKVQLAVGAVPTSVPSEKQ). Positions 277 to 289 (RLKSWFEPLVQDM) are specificity for association with VLDL.

This sequence belongs to the apolipoprotein A1/A4/E family. As to quaternary structure, homotetramer. May interact with ABCA1; functionally associated with ABCA1 in the biogenesis of HDLs. May interact with APP/A4 amyloid-beta peptide; the interaction is extremely stable in vitro but its physiological significance is unclear. May interact with MAPT. May interact with MAP2. In the cerebrospinal fluid, interacts with secreted SORL1. Interacts with PMEL; this allows the loading of PMEL luminal fragment on ILVs to induce fibril nucleation. Post-translationally, APOE exists as multiple glycosylated and sialylated glycoforms within cells and in plasma. The extent of glycosylation and sialylation are tissue and context specific. Glycated in plasma VLDL. In terms of processing, phosphorylated by FAM20C in the extracellular medium.

It localises to the secreted. The protein localises to the extracellular space. The protein resides in the extracellular matrix. Its subcellular location is the extracellular vesicle. It is found in the endosome. It localises to the multivesicular body. Functionally, APOE is an apolipoprotein, a protein associating with lipid particles, that mainly functions in lipoprotein-mediated lipid transport between organs via the plasma and interstitial fluids. APOE is a core component of plasma lipoproteins and is involved in their production, conversion and clearance. Apolipoproteins are amphipathic molecules that interact both with lipids of the lipoprotein particle core and the aqueous environment of the plasma. As such, APOE associates with chylomicrons, chylomicron remnants, very low density lipoproteins (VLDL) and intermediate density lipoproteins (IDL) but shows a preferential binding to high-density lipoproteins (HDL). It also binds a wide range of cellular receptors including the LDL receptor/LDLR and the very low-density lipoprotein receptor/VLDLR that mediate the cellular uptake of the APOE-containing lipoprotein particles. Finally, APOE also has a heparin-binding activity and binds heparan-sulfate proteoglycans on the surface of cells, a property that supports the capture and the receptor-mediated uptake of APOE-containing lipoproteins by cells. The sequence is that of Apolipoprotein E (APOE) from Diceros bicornis (Black rhinoceros).